The chain runs to 61 residues: Small ribosomal subunit protein uS14 (61 aa).

Zn(2+) contacts are provided by C24, C27, C40, and C43.

It belongs to the universal ribosomal protein uS14 family. Zinc-binding uS14 subfamily. Part of the 30S ribosomal subunit. Contacts proteins S3 and S10. The cofactor is Zn(2+).

Binds 16S rRNA, required for the assembly of 30S particles and may also be responsible for determining the conformation of the 16S rRNA at the A site. In Borreliella afzelii (strain PKo) (Borrelia afzelii), this protein is Small ribosomal subunit protein uS14.